Consider the following 96-residue polypeptide: ATP synthase subunit c (96 aa).

The next 2 membrane-spanning stretches (helical) occupy residues 28–50 (LGAG…NIGA) and 75–95 (AVTE…LFVL).

The protein belongs to the ATPase C chain family. F-type ATPases have 2 components, F(1) - the catalytic core - and F(0) - the membrane proton channel. F(1) has five subunits: alpha(3), beta(3), gamma(1), delta(1), epsilon(1). F(0) has three main subunits: a(1), b(2) and c(10-14). The alpha and beta chains form an alternating ring which encloses part of the gamma chain. F(1) is attached to F(0) by a central stalk formed by the gamma and epsilon chains, while a peripheral stalk is formed by the delta and b chains.

It localises to the cell inner membrane. F(1)F(0) ATP synthase produces ATP from ADP in the presence of a proton or sodium gradient. F-type ATPases consist of two structural domains, F(1) containing the extramembraneous catalytic core and F(0) containing the membrane proton channel, linked together by a central stalk and a peripheral stalk. During catalysis, ATP synthesis in the catalytic domain of F(1) is coupled via a rotary mechanism of the central stalk subunits to proton translocation. In terms of biological role, key component of the F(0) channel; it plays a direct role in translocation across the membrane. A homomeric c-ring of between 10-14 subunits forms the central stalk rotor element with the F(1) delta and epsilon subunits. The polypeptide is ATP synthase subunit c (Petrotoga mobilis (strain DSM 10674 / SJ95)).